Reading from the N-terminus, the 724-residue chain is Methionine--tRNA ligase (724 aa).

A 'HIGH' region motif is present at residues 11 to 21 (PYANGPIHAGH). 4 residues coordinate Zn(2+): Cys-143, Cys-146, Cys-156, and Cys-159. A 'KMSKS' region motif is present at residues 344-348 (KFSTS). Thr-347 is a binding site for ATP. A tRNA-binding domain is found at 624–724 (EFSKIDLRIG…KEVKLGAKVR (101 aa)).

The protein belongs to the class-I aminoacyl-tRNA synthetase family. MetG type 1 subfamily. In terms of assembly, homodimer. Zn(2+) serves as cofactor.

It localises to the cytoplasm. The enzyme catalyses tRNA(Met) + L-methionine + ATP = L-methionyl-tRNA(Met) + AMP + diphosphate. Functionally, is required not only for elongation of protein synthesis but also for the initiation of all mRNA translation through initiator tRNA(fMet) aminoacylation. This Pyrococcus furiosus (strain ATCC 43587 / DSM 3638 / JCM 8422 / Vc1) protein is Methionine--tRNA ligase.